The sequence spans 32 residues: Photosystem I reaction center subunit XII (32 aa).

Residues 4-26 traverse the membrane as a helical segment; that stretch reads ISDSQIIVILLSVFITSILALRL.

Belongs to the PsaM family.

It is found in the plastid. The protein resides in the chloroplast thylakoid membrane. This is Photosystem I reaction center subunit XII from Marchantia polymorpha (Common liverwort).